The following is a 94-amino-acid chain: MQHSLVFFFAVILHLSHLLHLDASIHPFRLPFSSKPFLLIPMSNTTLPHTAWPLSFLHQTVSTLKAVAVTHSLWHLQIPVDCQACNRKSKKIYC.

The signal sequence occupies residues 1 to 18 (MQHSLVFFFAVILHLSHL). An N-linked (GlcNAc...) asparagine glycan is attached at asparagine 44.

Specifically expressed in adult testis.

It is found in the secreted. The protein is Putative testis-specific prion protein (PRNT) of Homo sapiens (Human).